A 421-amino-acid chain; its full sequence is Glucose-1-phosphate adenylyltransferase (421 aa).

Alpha-D-glucose 1-phosphate is bound by residues Y109, G175, 190-191 (EK), and S208.

Belongs to the bacterial/plant glucose-1-phosphate adenylyltransferase family. As to quaternary structure, homotetramer.

The enzyme catalyses alpha-D-glucose 1-phosphate + ATP + H(+) = ADP-alpha-D-glucose + diphosphate. Its pathway is glycan biosynthesis; glycogen biosynthesis. In terms of biological role, involved in the biosynthesis of ADP-glucose, a building block required for the elongation reactions to produce glycogen. Catalyzes the reaction between ATP and alpha-D-glucose 1-phosphate (G1P) to produce pyrophosphate and ADP-Glc. In Teredinibacter turnerae (strain ATCC 39867 / T7901), this protein is Glucose-1-phosphate adenylyltransferase.